Consider the following 410-residue polypeptide: Formyl-CoA:oxalate CoA-transferase (410 aa).

Residues 18 to 19 (QS), 72 to 75 (LNTK), 96 to 98 (NFG), Arg-104, and 136 to 139 (KAYE) each bind CoA. Asp-168 (nucleophile) is an active-site residue. The interval 221 to 245 (PLAEYPNEDFGDEVPRSGNASGGGQ) is disordered. A substrate-binding site is contributed by 243-245 (GGQ).

Belongs to the CoA-transferase III family. Frc subfamily. In terms of assembly, homodimer.

The catalysed reaction is formyl-CoA + oxalate = oxalyl-CoA + formate. It functions in the pathway metabolic intermediate degradation; oxalate degradation; CO(2) and formate from oxalate: step 1/2. In terms of biological role, involved in the catabolism of oxalate and in the adapatation to low pH via the induction of the oxalate-dependent acid tolerance response (ATR). Catalyzes the transfer of the CoA moiety from formyl-CoA to oxalate. In Streptomyces coelicolor (strain ATCC BAA-471 / A3(2) / M145), this protein is Formyl-CoA:oxalate CoA-transferase.